Here is a 479-residue protein sequence, read N- to C-terminus: Putative L-cysteine desulfhydrase 2 (479 aa).

The interval 1–36 (MASLQSGGDAAANGVDADVDGAASPPSAKRPRAGAG) is disordered. Low complexity predominate over residues 7 to 36 (GGDAAANGVDADVDGAASPPSAKRPRAGAG). Residue Lys270 is modified to N6-(pyridoxal phosphate)lysine.

It belongs to the class-V pyridoxal-phosphate-dependent aminotransferase family. The cofactor is pyridoxal 5'-phosphate.

It carries out the reaction L-cysteine + H2O = hydrogen sulfide + pyruvate + NH4(+) + H(+). Its function is as follows. Catalyzes the production of hydrogen sulfide (H2S) from cysteine. This is Putative L-cysteine desulfhydrase 2 from Oryza sativa subsp. japonica (Rice).